The primary structure comprises 858 residues: MKKTFVKILSKSYVEGYPVGFFIGLIILAIFGSMVCIFSFMHYSEEENSNIQMDLERSSKQIIHNIQMNAMYLLSSIDTLKALYYVNPNFDRNDFNVFLNTTLKNSEFQYLFWIKKINNNDRNCFEEKFSKEIKDTFQIYSFDENTNSIHVAKNKSSYFPILHAFPDINKDIIGLDINSTDYMNETIKKSIFNKKPTVHLNKKVLLSKRNIDILIVSPIIVTKTLESTNETMEDMSHISSGLFLMEKNVQASRIEVENGNDFTIFLSTTNGEIVYQENYLNFKTLYQVHESGLFEDRLKYESSLKIADCVLKLWIFTTEEYENNSKTYLPLLVSIISAVILVLLITYSVDQRKQKSLIAKIMREKNNLINKILPLEVSVKLENGEDVVAERSNNACVFFLDIAGFTRFSSIHSPEQVIQVLIKIFNSMDLLCAKHGIEKIKTIGDAYMATCGIFPKCDDIRHNTYKMLGFAMDVLEFIPKEMSFHLGLQVRVGIHCGPVISGVISGYAKPHFDVWGDTVNVASRMESTGIAGQIHVSDRVYQLGKEDFNFSERCDIIHVKGKGRMKTWYLMGKKSSDFSLKKDFSRSRVQPSLFNRKQSHVHCIYPEFPSGLQALNIENNLNNTDAGCENCSKILKKTYAYSPDHSTSNYYYHGDDNSPPPPSLNSNDLIDGSEYHDDPFPSDSNVGYHDTSKDIKEDENEQNETLLFNQEQLKKKQIENIQRDLSLNDSIEAIKILNNNNNNNINDNNINNTNLNNNNNDININNSDNVNNYENNNNFSDKIENNDGDNNNINDNNYKSTNENNIKSKTLFKDSKSLINDIKMAKENCDNNDDNNNNNNNNNNNNNNDENVESKKNK.

At 1-18 (MKKTFVKILSKSYVEGYP) the chain is on the cytoplasmic side. A helical; Signal-anchor for type II membrane protein transmembrane segment spans residues 19-41 (VGFFIGLIILAIFGSMVCIFSFM). Residues 42-858 (HYSEEENSNI…DENVESKKNK (817 aa)) are Extracellular-facing. Positions 86-317 (VNPNFDRNDF…DCVLKLWIFT (232 aa)) constitute a CHASE domain. A Guanylate cyclase domain is found at 396-526 (CVFFLDIAGF…DTVNVASRME (131 aa)). Mg(2+) contacts are provided by aspartate 401, isoleucine 402, and aspartate 445. 3 disordered regions span residues 650-691 (YYYH…YHDT), 767-803 (SDNVNNYENNNNFSDKIENNDGDNNNINDNNYKSTNE), and 827-858 (ENCDNNDDNNNNNNNNNNNNNNDENVESKKNK). Low complexity-rich tracts occupy residues 767-778 (SDNVNNYENNNN), 788-797 (GDNNNINDNN), and 834-849 (DNNNNNNNNNNNNNND).

It belongs to the adenylyl cyclase class-4/guanylyl cyclase family.

The protein localises to the membrane. It carries out the reaction ATP = 3',5'-cyclic AMP + diphosphate. Insensitive to guanine nucleotides. Functionally, has a large extracellular domain which may be involved in the recognition of an extracellular signal present during germination, leading to activation or inhibition of cAMP synthesis by the cytoplasmic domain. In Dictyostelium discoideum (Social amoeba), this protein is Adenylate cyclase, germination specific (acgA).